The following is a 210-amino-acid chain: Glycerol-3-phosphate acyltransferase (210 aa).

The next 5 membrane-spanning stretches (helical) occupy residues 10–30, 59–79, 87–107, 116–136, and 161–181; these read ALIL…GIVI, PAAL…VLIA, AAQL…WLGF, FLGT…LTWL, and LLLG…LIFI.

It belongs to the PlsY family. As to quaternary structure, probably interacts with PlsX.

It localises to the cell inner membrane. It catalyses the reaction an acyl phosphate + sn-glycerol 3-phosphate = a 1-acyl-sn-glycero-3-phosphate + phosphate. Its pathway is lipid metabolism; phospholipid metabolism. In terms of biological role, catalyzes the transfer of an acyl group from acyl-phosphate (acyl-PO(4)) to glycerol-3-phosphate (G3P) to form lysophosphatidic acid (LPA). This enzyme utilizes acyl-phosphate as fatty acyl donor, but not acyl-CoA or acyl-ACP. This chain is Glycerol-3-phosphate acyltransferase, found in Cereibacter sphaeroides (strain ATCC 17025 / ATH 2.4.3) (Rhodobacter sphaeroides).